A 155-amino-acid polypeptide reads, in one-letter code: Ribosome maturation factor RimP (155 aa).

Belongs to the RimP family.

It localises to the cytoplasm. Functionally, required for maturation of 30S ribosomal subunits. The protein is Ribosome maturation factor RimP of Maridesulfovibrio salexigens (strain ATCC 14822 / DSM 2638 / NCIMB 8403 / VKM B-1763) (Desulfovibrio salexigens).